We begin with the raw amino-acid sequence, 323 residues long: tRNA dimethylallyltransferase (323 aa).

Residue 27–34 (GPTGSGKT) coordinates ATP. 29–34 (TGSGKT) lines the substrate pocket. Interaction with substrate tRNA regions lie at residues 52–55 (DSRQ) and 176–180 (QRIVR).

Belongs to the IPP transferase family. As to quaternary structure, monomer. It depends on Mg(2+) as a cofactor.

The catalysed reaction is adenosine(37) in tRNA + dimethylallyl diphosphate = N(6)-dimethylallyladenosine(37) in tRNA + diphosphate. Functionally, catalyzes the transfer of a dimethylallyl group onto the adenine at position 37 in tRNAs that read codons beginning with uridine, leading to the formation of N6-(dimethylallyl)adenosine (i(6)A). In Desulfovibrio desulfuricans (strain ATCC 27774 / DSM 6949 / MB), this protein is tRNA dimethylallyltransferase.